A 685-amino-acid chain; its full sequence is Exocyst complex component 8 (685 aa).

Residues 151 to 251 (YLVYNGDLTE…WLEILEQTKK (101 aa)) enclose the PH domain. Basic and acidic residues predominate over residues 254–263 (ALNEKQKQEE). Positions 254-273 (ALNEKQKQEETTPQLPVVPE) are disordered.

It belongs to the EXO84 family. The exocyst complex is composed of exoc1, exoc2, exoc3, exoc4, exoc5, exoc6, exoc7 and exoc8.

The protein localises to the cytoplasm. The protein resides in the perinuclear region. It is found in the cell projection. Its subcellular location is the growth cone. In terms of biological role, component of the exocyst complex involved in the docking of exocytic vesicles with fusion sites on the plasma membrane. This is Exocyst complex component 8 (exoc8) from Xenopus laevis (African clawed frog).